Reading from the N-terminus, the 809-residue chain is Phenylalanine--tRNA ligase beta subunit (809 aa).

One can recognise a tRNA-binding domain in the interval 39 to 152 (KDKWPNVYVG…ADAPVGMLAS (114 aa)). The region spanning 404–492 (KDRNSVVLSL…RIAGYDTIPC (89 aa)) is the B5 domain. Asp470, Asp476, Glu479, and Glu480 together coordinate Mg(2+). Residues 717–808 (NRFPSVERDL…LNTETGAVLR (92 aa)) enclose the FDX-ACB domain.

This sequence belongs to the phenylalanyl-tRNA synthetase beta subunit family. Type 1 subfamily. As to quaternary structure, tetramer of two alpha and two beta subunits. Mg(2+) is required as a cofactor.

It is found in the cytoplasm. The enzyme catalyses tRNA(Phe) + L-phenylalanine + ATP = L-phenylalanyl-tRNA(Phe) + AMP + diphosphate + H(+). In Dehalococcoides mccartyi (strain ATCC BAA-2266 / KCTC 15142 / 195) (Dehalococcoides ethenogenes (strain 195)), this protein is Phenylalanine--tRNA ligase beta subunit.